The following is a 385-amino-acid chain: 8-amino-7-oxononanoate synthase (385 aa).

R21 contributes to the substrate binding site. Residue 108 to 109 (GF) participates in pyridoxal 5'-phosphate binding. Position 133 (H133) interacts with substrate. S179, H207, and T233 together coordinate pyridoxal 5'-phosphate. K236 carries the N6-(pyridoxal phosphate)lysine modification. Position 352 (T352) interacts with substrate.

Belongs to the class-II pyridoxal-phosphate-dependent aminotransferase family. BioF subfamily. Homodimer. The cofactor is pyridoxal 5'-phosphate.

The catalysed reaction is 6-carboxyhexanoyl-[ACP] + L-alanine + H(+) = (8S)-8-amino-7-oxononanoate + holo-[ACP] + CO2. It participates in cofactor biosynthesis; biotin biosynthesis. Catalyzes the decarboxylative condensation of pimeloyl-[acyl-carrier protein] and L-alanine to produce 8-amino-7-oxononanoate (AON), [acyl-carrier protein], and carbon dioxide. The chain is 8-amino-7-oxononanoate synthase from Salmonella dublin (strain CT_02021853).